Consider the following 894-residue polypeptide: Exocyst complex component 1 (894 aa).

Coiled coils occupy residues 152–199 (GDEE…LQVL) and 205–259 (QSIM…NHLI). The tract at residues 437–495 (SKESKKFATLPRKESAVKQETESLHGSSGKLTGSTSSLNKLSVQSSGSRRSQSSSLLDM) is disordered. A compositionally biased stretch (basic and acidic residues) spans 438–459 (KESKKFATLPRKESAVKQETES). A compositionally biased stretch (low complexity) spans 460-491 (LHGSSGKLTGSTSSLNKLSVQSSGSRRSQSSS). Residue Ser470 is modified to Phosphoserine. The residue at position 471 (Thr471) is a Phosphothreonine. A phosphoserine mark is found at Ser473, Ser487, and Ser501.

Belongs to the SEC3 family. In terms of assembly, the exocyst complex is composed of EXOC1, EXOC2, EXOC3, EXOC4, EXOC5, EXOC6, EXOC7 and EXOC8. Interacts with EEF1A1. Interacts with SLC6A9; interaction increases the transporter capacity of SLC6A9 probably by promoting its insertion into the cell membrane.

Its subcellular location is the midbody. It is found in the midbody ring. The protein localises to the cytoplasm. It localises to the perinuclear region. The protein resides in the cell membrane. Functionally, component of the exocyst complex involved in the docking of exocytic vesicles with fusion sites on the plasma membrane. In Mus musculus (Mouse), this protein is Exocyst complex component 1 (Exoc1).